Reading from the N-terminus, the 526-residue chain is MTLTIKIGTLNDSDQSAVHNGTENGSDFRKITPTEEEICDDVVLLWKEEPGTEDATIQHLYDRITERNQSWKLSASRFRKILNEHHLYDTDLETVSLYKDKIHFPKALDSDAKVEVKFIDDEHGRGLFAKRDFSKGQIILKENKPIVYIPPLDKLFLISNGKACARCGKALYDLTQHKIMVHYLDCEVCKAIWCSEKCKKAHASLHELLYHSWRSNRIDILHAGNWKRFVNYCEKYCFTAAFSVGLIYGSMLLDTTGEVKEQWQKLASISQRERIKLRDASGIGSTFSLLNGTTVHTEEESDNGTKKGVEKNIDDETVWEKCYELFCGAFPKASEEIDFEKFLTMIGTFNINQYNGQVYHWISFINHDCEPNAYIEQVEEHEELRLHARKPIKKGEQIRITYVNPLHGVRLRRRELRVNWGFLCQCDRCQNELSTFERVPNLEKKNADANLGVEKIDSNDNSEDGSKKSTGNRKSSMREAQPDLKEILKNGKEFELDIPETVDTQGNVRKTSVRFDSNVSVAVDER.

Positions 112-403 (AKVEVKFIDD…KGEQIRITYV (292 aa)) constitute an SET domain. The segment at 450–492 (NLGVEKIDSNDNSEDGSKKSTGNRKSSMREAQPDLKEILKNGK) is disordered. Residues 476–492 (SMREAQPDLKEILKNGK) show a composition bias toward basic and acidic residues. Ser517 carries the phosphoserine modification.

Belongs to the class V-like SAM-binding methyltransferase superfamily. Histone-lysine methyltransferase family. SET5 subfamily.

The protein resides in the nucleus. It is found in the chromosome. It localises to the cytoplasm. The catalysed reaction is L-lysyl-[histone] + S-adenosyl-L-methionine = N(6)-methyl-L-lysyl-[histone] + S-adenosyl-L-homocysteine + H(+). Histone methyltransferase that monomethylates 'Lys-5', 'Lys-8' and 'Lys-12' of histone H4 (H4K5me1, H4K8me1 and H4K12me1, respectively), thereby controlling gene expression and remodeling chromatin structures. The chain is Histone-lysine N-methyltransferase SET5 (SET5) from Saccharomyces cerevisiae (strain YJM789) (Baker's yeast).